The sequence spans 332 residues: Beta-ketoacyl-[acyl-carrier-protein] synthase III 5 (332 aa).

Catalysis depends on residues C111 and H253. The segment at 254–258 (QANAR) is ACP-binding. N283 is a catalytic residue.

This sequence belongs to the thiolase-like superfamily. FabH family. In terms of assembly, homodimer.

It is found in the cytoplasm. It carries out the reaction malonyl-[ACP] + acetyl-CoA + H(+) = 3-oxobutanoyl-[ACP] + CO2 + CoA. Its pathway is lipid metabolism; fatty acid biosynthesis. Functionally, catalyzes the condensation reaction of fatty acid synthesis by the addition to an acyl acceptor of two carbons from malonyl-ACP. Catalyzes the first condensation reaction which initiates fatty acid synthesis and may therefore play a role in governing the total rate of fatty acid production. Possesses both acetoacetyl-ACP synthase and acetyl transacylase activities. Its substrate specificity determines the biosynthesis of branched-chain and/or straight-chain of fatty acids. The protein is Beta-ketoacyl-[acyl-carrier-protein] synthase III 5 of Streptomyces coelicolor (strain ATCC BAA-471 / A3(2) / M145).